Here is a 290-residue protein sequence, read N- to C-terminus: Nucleotide-binding protein BAV3158 (290 aa).

9 to 16 serves as a coordination point for ATP; it reads GISGSGKS. 58–61 is a GTP binding site; sequence DVRS.

It belongs to the RapZ-like family.

In terms of biological role, displays ATPase and GTPase activities. This chain is Nucleotide-binding protein BAV3158, found in Bordetella avium (strain 197N).